We begin with the raw amino-acid sequence, 744 residues long: Receptor-like serine/threonine-protein kinase ALE2 (744 aa).

An N-terminal signal peptide occupies residues 1-19; sequence MRNFAMLLLLILLLHSLAS. The Extracellular portion of the chain corresponds to 20–260; the sequence is FPICFARLFP…SQGIGFRTIA (241 aa). Positions 59–68 are enriched in pro residues; sequence PAFSPNPSRI. The tract at residues 59 to 79 is disordered; it reads PAFSPNPSRIPPLRHKGHHRH. Residues 70 to 79 are compositionally biased toward basic residues; it reads PLRHKGHHRH. N-linked (GlcNAc...) asparagine glycosylation is found at N87, N186, N204, N243, and N249. The chain crosses the membrane as a helical span at residues 261–281; that stretch reads IIALSGFVLILVLVGAISIIV. Topologically, residues 282–744 are cytoplasmic; the sequence is KWKKIGKSSN…HLWSGNGDWL (463 aa). The 271-residue stretch at 349–619 folds into the Protein kinase domain; it reads FSAKRVLGEG…GEVVQALKLI (271 aa). Residues 355–363 and K377 each bind ATP; that span reads LGEGGFGRV. Catalysis depends on D470, which acts as the Proton acceptor. Disordered stretches follow at residues 681–705 and 722–744; these read EDME…PNRS and GSMS…GDWL.

It belongs to the protein kinase superfamily. Ser/Thr protein kinase family. Autophosphorylated and phosphorylated by ACR4.

The protein localises to the cell membrane. It carries out the reaction L-seryl-[protein] + ATP = O-phospho-L-seryl-[protein] + ADP + H(+). The enzyme catalyses L-threonyl-[protein] + ATP = O-phospho-L-threonyl-[protein] + ADP + H(+). Functionally, required during the differentiation of the protoderm into shoots epidermis and cuticle. The sequence is that of Receptor-like serine/threonine-protein kinase ALE2 (ALE2) from Arabidopsis thaliana (Mouse-ear cress).